The following is a 307-amino-acid chain: Aspartate carbamoyltransferase catalytic subunit (307 aa).

Carbamoyl phosphate is bound by residues arginine 59 and threonine 60. Lysine 87 serves as a coordination point for L-aspartate. Positions 109, 139, and 142 each coordinate carbamoyl phosphate. Arginine 172 and arginine 224 together coordinate L-aspartate. Carbamoyl phosphate-binding residues include alanine 265 and proline 266.

This sequence belongs to the aspartate/ornithine carbamoyltransferase superfamily. ATCase family. In terms of assembly, heterododecamer (2C3:3R2) of six catalytic PyrB chains organized as two trimers (C3), and six regulatory PyrI chains organized as three dimers (R2).

The enzyme catalyses carbamoyl phosphate + L-aspartate = N-carbamoyl-L-aspartate + phosphate + H(+). It functions in the pathway pyrimidine metabolism; UMP biosynthesis via de novo pathway; (S)-dihydroorotate from bicarbonate: step 2/3. Functionally, catalyzes the condensation of carbamoyl phosphate and aspartate to form carbamoyl aspartate and inorganic phosphate, the committed step in the de novo pyrimidine nucleotide biosynthesis pathway. The chain is Aspartate carbamoyltransferase catalytic subunit from Streptococcus agalactiae serotype Ia (strain ATCC 27591 / A909 / CDC SS700).